A 245-amino-acid polypeptide reads, in one-letter code: Carbohydrate deacetylase (245 aa).

Residues H59 and H125 each contribute to the Mg(2+) site.

The protein belongs to the YdjC deacetylase family. In terms of assembly, homodimer. It depends on Mg(2+) as a cofactor.

Its function is as follows. Probably catalyzes the deacetylation of acetylated carbohydrates an important step in the degradation of oligosaccharides. The chain is Carbohydrate deacetylase from Listeria welshimeri serovar 6b (strain ATCC 35897 / DSM 20650 / CCUG 15529 / CIP 8149 / NCTC 11857 / SLCC 5334 / V8).